The sequence spans 269 residues: Calretinin (269 aa).

EF-hand domains are found at residues L14–A49, S61–F96, G105–K140, K149–F184, L193–K228, and K230–S265. Residues D27, D29, N31, Y33, E38, D74, N76, D78, K80, E85, D118, D120, S122, Y124, E129, D162, N164, D166, K168, E173, D206, D208, S210, and E217 each coordinate Ca(2+).

This sequence belongs to the calbindin family.

It is found in the synapse. It localises to the cell projection. The protein localises to the dendrite. In terms of biological role, calcium-binding protein involved in calcium homeostasis and signal transduction. It plays a critical role in buffering intracellular calcium levels and modulating calcium-dependent signaling pathways. Predominantly expressed in specific neuronal populations, influences synaptic plasticity and neuronal excitability, contributing to learning and memory. During embryonic development, it facilitates neuronal differentiation and maturation. This Gallus gallus (Chicken) protein is Calretinin (CALB2).